The primary structure comprises 111 residues: Natriuretic peptide TNP-b (111 aa).

Positions 1-27 (MVGLSRLAGGGLLLLLLLALLPLALDG) are cleaved as a signal peptide. Residues 28-71 (KPAPLPQALPEALAGGTTALRRDVTEEQQQQLVAEESSGPAAGR) constitute a propeptide that is removed on maturation. Disordered regions lie at residues 51–77 (VTEE…PKIG) and 92–111 (SGLG…PGGS). Cys80 and Cys96 are disulfide-bonded. The propeptide occupies 107-111 (IPGGS).

The protein belongs to the natriuretic peptide family. As to expression, expressed by the venom gland.

The protein localises to the secreted. Its function is as follows. Snake venom natriuretic peptide that exhibits vasoactive and probable hypotensive activity. Is only weakly active on natriuretic peptide receptor-C (NPR3). This Oxyuranus scutellatus scutellatus (Australian taipan) protein is Natriuretic peptide TNP-b.